A 299-amino-acid polypeptide reads, in one-letter code: tRNA dimethylallyltransferase (299 aa).

5–12 (GPTASGKT) provides a ligand contact to ATP. Residue 7 to 12 (TASGKT) coordinates substrate. Interaction with substrate tRNA stretches follow at residues 30-33 (DSAL), 154-158 (QRLSR), and 235-240 (RCVGYR).

The protein belongs to the IPP transferase family. Monomer. Mg(2+) serves as cofactor.

It catalyses the reaction adenosine(37) in tRNA + dimethylallyl diphosphate = N(6)-dimethylallyladenosine(37) in tRNA + diphosphate. In terms of biological role, catalyzes the transfer of a dimethylallyl group onto the adenine at position 37 in tRNAs that read codons beginning with uridine, leading to the formation of N6-(dimethylallyl)adenosine (i(6)A). The chain is tRNA dimethylallyltransferase from Shewanella denitrificans (strain OS217 / ATCC BAA-1090 / DSM 15013).